Consider the following 152-residue polypeptide: Small ribosomal subunit protein uS13 (152 aa).

This sequence belongs to the universal ribosomal protein uS13 family. Part of the 30S ribosomal subunit. Forms a loose heterodimer with protein S19. Forms two bridges to the 50S subunit in the 70S ribosome.

Located at the top of the head of the 30S subunit, it contacts several helices of the 16S rRNA. In the 70S ribosome it contacts the 23S rRNA (bridge B1a) and protein L5 of the 50S subunit (bridge B1b), connecting the 2 subunits; these bridges are implicated in subunit movement. This chain is Small ribosomal subunit protein uS13, found in Pyrobaculum aerophilum (strain ATCC 51768 / DSM 7523 / JCM 9630 / CIP 104966 / NBRC 100827 / IM2).